Consider the following 659-residue polypeptide: DNA mismatch repair protein MutL (659 aa).

This sequence belongs to the DNA mismatch repair MutL/HexB family.

This protein is involved in the repair of mismatches in DNA. It is required for dam-dependent methyl-directed DNA mismatch repair. May act as a 'molecular matchmaker', a protein that promotes the formation of a stable complex between two or more DNA-binding proteins in an ATP-dependent manner without itself being part of a final effector complex. The protein is DNA mismatch repair protein MutL of Ligilactobacillus salivarius (strain UCC118) (Lactobacillus salivarius).